Reading from the N-terminus, the 147-residue chain is Hemoglobin subunit beta-1 (147 aa).

The region spanning 3-147 (HWTDFERSTI…VVFSLGKQYH (145 aa)) is the Globin domain. Heme b-binding residues include histidine 64 and histidine 93.

Belongs to the globin family. As to quaternary structure, hb1 is a heterotetramer of two alpha-1 chains and two beta-1 chains. Red blood cells.

Involved in oxygen transport from gills to the various peripheral tissues. This chain is Hemoglobin subunit beta-1, found in Liparis tunicatus (Kelp snailfish).